A 318-amino-acid polypeptide reads, in one-letter code: Taste receptor type 2 member 117 (318 aa).

The Extracellular portion of the chain corresponds to 1–16 (MQHNLKTIFVISHSTL). A helical membrane pass occupies residues 17–37 (TIILFTELVTGIIGNGFMALV). The Cytoplasmic segment spans residues 38-53 (HCMDWLRRKKISLVNQ). A helical membrane pass occupies residues 54-74 (ILTALAISRIFQLCLLFISLV). The Extracellular portion of the chain corresponds to 75-93 (ISFSYPDLTTTSLIKVTCN). The chain crosses the membrane as a helical span at residues 94-114 (LWIIVNHFNIWLATCLGIFYF). The Cytoplasmic portion of the chain corresponds to 115 to 134 (LKISNFSNSLFLYLKWRVEK). A helical membrane pass occupies residues 135 to 155 (VVLVTLLVSLVLLTLNSLLIN). Residues 156–189 (LEINICINEYQRNITYSFNSYYHANCHRQMLSLH) are Extracellular-facing. Asn-168 is a glycosylation site (N-linked (GlcNAc...) asparagine). A helical transmembrane segment spans residues 190–210 (IIFLSVPFVLSLSTFLLLIFS). At 211–238 (LGTHHKKMQQHVQGRRDASTMAHFKALQ) the chain is on the cytoplasmic side. A helical membrane pass occupies residues 239–259 (TVIAFLLLYSIFILSVLVQIW). At 260-268 (KYELLKKNL) the chain is on the extracellular side. A helical membrane pass occupies residues 269 to 289 (FILFCQVAYVAFPSFHSYILI). At 290–318 (LGDMKMRQACLSVLWWQKFRKNYVEPLDL) the chain is on the cytoplasmic side.

The protein belongs to the G-protein coupled receptor T2R family.

The protein resides in the membrane. Functionally, putative taste receptor which may play a role in the perception of bitterness. This is Taste receptor type 2 member 117 from Rattus norvegicus (Rat).